Consider the following 621-residue polypeptide: Signal recognition particle receptor subunit alpha homolog (621 aa).

The tract at residues 1-158 (MFDQLAVFTP…KKFEQYFRIK (158 aa)) is SRX. A disordered region spans residues 167–217 (HINPDNFTKNGSVPQSHNKNTKKKLRDTKGKKQSTGNVGSGRKWGRDGGML). Positions 171–183 (DNFTKNGSVPQSH) are enriched in polar residues. Positions 185-198 (KNTKKKLRDTKGKK) are enriched in basic residues. Residue serine 239 is modified to Phosphoserine. An NG domain region spans residues 398–620 (YVFSIVGVNG…SVKWAVNTLM (223 aa)). Residues 404 to 411 (GVNGVGKS) and 510 to 514 (DTAGR) each bind GTP. Residue serine 523 is modified to Phosphoserine. Residue 572 to 575 (SKCD) participates in GTP binding.

Belongs to the GTP-binding SRP family. As to quaternary structure, heterodimer of an alpha and a beta chain.

It localises to the endoplasmic reticulum membrane. Component of the SRP (signal recognition particle) receptor (SR). Ensures, in conjunction with the signal recognition particle, the correct targeting of the nascent secretory proteins to the endoplasmic reticulum membrane system. GTP hydrolysis may enhance the fidelity of and provide unidirectionality to the targeting reaction. It is important but not essential for cell growth. May be directly involved in mitochondrial protein import. The protein is Signal recognition particle receptor subunit alpha homolog (SRP101) of Saccharomyces cerevisiae (strain ATCC 204508 / S288c) (Baker's yeast).